Here is a 329-residue protein sequence, read N- to C-terminus: D-lactate dehydrogenase (329 aa).

Residues 154–155, D174, 205–206, N211, 232–234, and D258 each bind NAD(+); these read KI, CP, and TSR. Residue R234 is part of the active site. E263 is an active-site residue. H295 (proton donor) is an active-site residue.

Belongs to the D-isomer specific 2-hydroxyacid dehydrogenase family.

The catalysed reaction is (R)-lactate + NAD(+) = pyruvate + NADH + H(+). Its function is as follows. Fermentative lactate dehydrogenase. This Escherichia coli (strain K12) protein is D-lactate dehydrogenase (ldhA).